We begin with the raw amino-acid sequence, 232 residues long: Small ribosomal subunit protein uS2 (232 aa).

This sequence belongs to the universal ribosomal protein uS2 family.

This Syntrophomonas wolfei subsp. wolfei (strain DSM 2245B / Goettingen) protein is Small ribosomal subunit protein uS2.